The primary structure comprises 556 residues: Formate--tetrahydrofolate ligase (556 aa).

65 to 72 (TPAGEGKS) is an ATP binding site.

It belongs to the formate--tetrahydrofolate ligase family.

It catalyses the reaction (6S)-5,6,7,8-tetrahydrofolate + formate + ATP = (6R)-10-formyltetrahydrofolate + ADP + phosphate. It functions in the pathway one-carbon metabolism; tetrahydrofolate interconversion. The polypeptide is Formate--tetrahydrofolate ligase (Streptococcus agalactiae serotype V (strain ATCC BAA-611 / 2603 V/R)).